Reading from the N-terminus, the 242-residue chain is DNA repair protein RecO (242 aa).

The protein belongs to the RecO family.

Its function is as follows. Involved in DNA repair and RecF pathway recombination. This is DNA repair protein RecO from Paracoccus denitrificans (strain Pd 1222).